The sequence spans 507 residues: MLSRSGLRGARLRVVSLTSQRRLLNHFITHPPEPIPPPPPPAPSSSPSPKQFTLAVKDNIATTIPGLPTTCASGILSKSYVSPIEATIITQLRARGAVITGKTNLDEFGMGSHSIYSHYGPVSQDTPPETSAGGSSGGSAVAVANGEVELALGTDTGGSVRLPAAYTGIIGYKPSYGMISRYGVIPYANSLDTVGFLSKQINPLKELIIGERGLWKEHDSNDPTSLTTAARKRCAAQRRGYRSRQGQTTELEGLKFGIPLEYNIAELDPEIRDAWAAAAKRLQDAGARIVPVSLPTTKHALAAYYVIAPAEASSNLAKYDGVRYGARDAEGASDASAGGVLYASTRGKGFGEEVKRRILLGSYTLSSEAMDNYFIKAQRVRRLVRRDFNRVFALENPLQERETFELSDLPEEVEMEDKWGPEEVDFLLCPTAPTLAPKLKGVMEQQPVDAYMNDVFTVPASLAGLPAISVPMKVATEGAAGLQLIGQYWDDARLLDVADAVAKEVRT.

Residues 29 to 51 (THPPEPIPPPPPPAPSSSPSPKQ) are disordered. Residues 31-46 (PPEPIPPPPPPAPSSS) are compositionally biased toward pro residues. Catalysis depends on charge relay system residues Lys-57 and Ser-135. Ser-159 acts as the Acyl-ester intermediate in catalysis.

This sequence belongs to the amidase family. GatA subfamily. Subunit of the heterotrimeric GatCAB amidotransferase (AdT) complex, composed of A, B and C subunits.

The protein resides in the mitochondrion. The catalysed reaction is L-glutamyl-tRNA(Gln) + L-glutamine + ATP + H2O = L-glutaminyl-tRNA(Gln) + L-glutamate + ADP + phosphate + H(+). Its function is as follows. Allows the formation of correctly charged Gln-tRNA(Gln) through the transamidation of misacylated Glu-tRNA(Gln) in the mitochondria. The reaction takes place in the presence of glutamine and ATP through an activated gamma-phospho-Glu-tRNA(Gln). This is Glutamyl-tRNA(Gln) amidotransferase subunit A, mitochondrial from Podospora anserina (strain S / ATCC MYA-4624 / DSM 980 / FGSC 10383) (Pleurage anserina).